Reading from the N-terminus, the 308-residue chain is Apolipoprotein F (308 aa).

It belongs to the apolipoprotein F family.

Its subcellular location is the secreted. Minor apolipoprotein that associates with LDL. Inhibits cholesteryl ester transfer protein (CETP) activity and appears to be an important regulator of cholesterol transport. Also associates to a lesser degree with VLDL, Apo-AI and Apo-AII. In Rattus norvegicus (Rat), this protein is Apolipoprotein F (Apof).